Reading from the N-terminus, the 93-residue chain is Small ribosomal subunit protein uS19 (93 aa).

It belongs to the universal ribosomal protein uS19 family.

Protein S19 forms a complex with S13 that binds strongly to the 16S ribosomal RNA. This Thermus thermophilus (strain ATCC BAA-163 / DSM 7039 / HB27) protein is Small ribosomal subunit protein uS19 (rpsS).